The following is a 214-amino-acid chain: rRNA N(6)-adenosine-methyltransferase metl-5 (214 aa).

S-adenosyl-L-methionine-binding positions include glutamine 25, threonine 28, glycine 55, cysteine 58, aspartate 78, and 106–107; that span reads DI.

It belongs to the methyltransferase superfamily. PrmA family. Heterodimer; heterodimerizes with TRMT112/C04H5.1.

The enzyme catalyses adenosine in rRNA + S-adenosyl-L-methionine = N(6)-methyladenosine in rRNA + S-adenosyl-L-homocysteine + H(+). Catalytic subunit of a heterodimer with TRMT112/C04H5.1, which specifically methylates the 6th position of adenine in position 1717 of 18S rRNA. The chain is rRNA N(6)-adenosine-methyltransferase metl-5 from Caenorhabditis elegans.